The sequence spans 513 residues: ATP synthase subunit alpha (513 aa).

Residue 169–176 (GDRQTGKT) participates in ATP binding.

Belongs to the ATPase alpha/beta chains family. As to quaternary structure, F-type ATPases have 2 components, CF(1) - the catalytic core - and CF(0) - the membrane proton channel. CF(1) has five subunits: alpha(3), beta(3), gamma(1), delta(1), epsilon(1). CF(0) has three main subunits: a(1), b(2) and c(9-12). The alpha and beta chains form an alternating ring which encloses part of the gamma chain. CF(1) is attached to CF(0) by a central stalk formed by the gamma and epsilon chains, while a peripheral stalk is formed by the delta and b chains.

The protein resides in the cell inner membrane. The enzyme catalyses ATP + H2O + 4 H(+)(in) = ADP + phosphate + 5 H(+)(out). Produces ATP from ADP in the presence of a proton gradient across the membrane. The alpha chain is a regulatory subunit. This is ATP synthase subunit alpha from Haemophilus influenzae (strain PittGG).